The chain runs to 245 residues: tRNA1(Val) (adenine(37)-N6)-methyltransferase (245 aa).

This sequence belongs to the methyltransferase superfamily. tRNA (adenine-N(6)-)-methyltransferase family.

It localises to the cytoplasm. It carries out the reaction adenosine(37) in tRNA1(Val) + S-adenosyl-L-methionine = N(6)-methyladenosine(37) in tRNA1(Val) + S-adenosyl-L-homocysteine + H(+). Specifically methylates the adenine in position 37 of tRNA(1)(Val) (anticodon cmo5UAC). The chain is tRNA1(Val) (adenine(37)-N6)-methyltransferase from Shigella boydii serotype 18 (strain CDC 3083-94 / BS512).